Here is a 523-residue protein sequence, read N- to C-terminus: GMP synthase [glutamine-hydrolyzing] (523 aa).

Residues 8–205 (KILILDFGSQ…VVNICGCETK (198 aa)) enclose the Glutamine amidotransferase type-1 domain. The active-site Nucleophile is the cysteine 85. Residues histidine 179 and glutamate 181 contribute to the active site. Residues 206 to 398 (WTAENIIEDA…LGLPAEMINR (193 aa)) enclose the GMPS ATP-PPase domain. 233–239 (SGGVDSS) is a binding site for ATP.

As to quaternary structure, homodimer.

It carries out the reaction XMP + L-glutamine + ATP + H2O = GMP + L-glutamate + AMP + diphosphate + 2 H(+). The protein operates within purine metabolism; GMP biosynthesis; GMP from XMP (L-Gln route): step 1/1. In terms of biological role, catalyzes the synthesis of GMP from XMP. In Haemophilus influenzae (strain ATCC 51907 / DSM 11121 / KW20 / Rd), this protein is GMP synthase [glutamine-hydrolyzing] (guaA).